The chain runs to 505 residues: ATP synthase subunit alpha (505 aa).

170–177 (GDRQTGKT) is an ATP binding site.

Belongs to the ATPase alpha/beta chains family. As to quaternary structure, F-type ATPases have 2 components, CF(1) - the catalytic core - and CF(0) - the membrane proton channel. CF(1) has five subunits: alpha(3), beta(3), gamma(1), delta(1), epsilon(1). CF(0) has four main subunits: a(1), b(1), b'(1) and c(9-12).

Its subcellular location is the cellular thylakoid membrane. It catalyses the reaction ATP + H2O + 4 H(+)(in) = ADP + phosphate + 5 H(+)(out). In terms of biological role, produces ATP from ADP in the presence of a proton gradient across the membrane. The alpha chain is a regulatory subunit. This is ATP synthase subunit alpha from Prochlorococcus marinus (strain MIT 9303).